A 3414-amino-acid polypeptide reads, in one-letter code: Hemocyanin 1 (3414 aa).

A signal peptide spans 1–16; the sequence is MLSVRLLIVVLALANA. An a divalent metal cation-binding site is contributed by Glu-17. The segment at 17–437 is functional unit a (wall); that stretch reads ENLVRKSVEH…PPVKHHQSAN (421 aa). His-58 serves as a coordination point for Cu cation. Residues Cys-64 and Cys-73 are joined by a disulfide bond. The segment at residues 74-76 is a cross-link (2'-(S-cysteinyl)-histidine (Cys-His)); it reads CIH. Cu cation is bound by residues His-76, His-85, His-195, His-199, and His-226. Residues Cys-185 and Cys-252 are joined by a disulfide bond. A cross-link (2'-(S-cysteinyl)-histidine (Cys-His)) is located at residues 287-290; sequence CELH. A disulfide bridge links Cys-339 with Cys-351. N-linked (GlcNAc...) asparagine glycosylation is present at Asn-403. The segment at 438–851 is functional unit b (wall); the sequence is LLVRKNINDL…RVKFDKVPRS (414 aa). His-478 provides a ligand contact to Cu cation. Cys-484 and Cys-495 form a disulfide bridge. The segment at residues 496–498 is a cross-link (2'-(S-cysteinyl)-histidine (Cys-His)); it reads CVH. The Cu cation site is built by His-498 and His-507. N-linked (GlcNAc...) asparagine glycosylation occurs at Asn-545. Cys-608 and Cys-674 form a disulfide bridge. His-618, His-622, and His-649 together coordinate Cu cation. A WD 1 repeat occupies 628 to 669; sequence SEHFSMSSLHYTAFDPLFYFHHSNVDRLWAVWQALQMRRHKP. A divalent metal cation is bound at residue Glu-737. Residues 852–1271 form a functional unit c (wall) region; that stretch reads RLIRKNVDRL…EVYQAEVTSA (420 aa). His-892 contacts Cu cation. A disulfide bridge links Cys-898 with Cys-909. Positions 910–912 form a cross-link, 2'-(S-cysteinyl)-histidine (Cys-His); the sequence is CVH. 5 residues coordinate Cu cation: His-912, His-921, His-1031, His-1035, and His-1062. Disulfide bonds link Cys-1021-Cys-1088 and Cys-1178-Cys-1184. A WD 2 repeat occupies 1041-1082; it reads AQPYGMASLRYTAFDPLFYLHHSNTDRIWAIWQALQKYRGKP. The functional unit d (wall) stretch occupies residues 1272-1680; it reads NRIRKNIENL…AHTDDGHTEP (409 aa). His-1309 is a binding site for Cu cation. Cys-1315 and Cys-1324 are joined by a disulfide. Residues 1325 to 1327 constitute a cross-link (2'-(S-cysteinyl)-histidine (Cys-His)); sequence CVH. His-1327, His-1336, His-1440, His-1444, and His-1471 together coordinate Cu cation. 2 disulfide bridges follow: Cys-1430–Cys-1497 and Cys-1585–Cys-1595. A WD 3 repeat occupies 1450 to 1491; the sequence is KGKYSMSNLDYAAFDPVFFLHHATTDRIWAIWQDLQRFRKRP. The N-linked (GlcNAc...) asparagine glycan is linked to Asn-1648. Positions 1681–2097 are functional unit e (wall); sequence VMIRKDITQL…HDISSHHLSL (417 aa). A Cu cation-binding site is contributed by His-1721. Residues Cys-1727 and Cys-1738 are joined by a disulfide bond. A cross-link (2'-(S-cysteinyl)-histidine (Cys-His)) is located at residues 1739 to 1741; that stretch reads CVH. The Cu cation site is built by His-1741, His-1750, His-1863, His-1867, and His-1894. 2 disulfide bridges follow: Cys-1853–Cys-1920 and Cys-2009–Cys-2015. Residues 1873 to 1914 form a WD 4 repeat; sequence KEPYGIGHLHYASYDPLFYIHHSQTDRIWAIWQSLQRFRGLS. The functional unit f (wall) stretch occupies residues 2098–2517; it reads NKVRHDLSTL…EDHHSSSMAG (420 aa). His-2138 is a Cu cation binding site. Cys-2144 and Cys-2154 are disulfide-bonded. An N-linked (GlcNAc...) asparagine glycan is attached at Asn-2145. The segment at residues 2155–2157 is a cross-link (2'-(S-cysteinyl)-histidine (Cys-His)); the sequence is CIH. Residues His-2157, His-2166, His-2276, His-2280, and His-2307 each contribute to the Cu cation site. One copy of the WD 5 repeat lies at 2163–2199; that stretch reads PHWHRLYTLQFEQALRRHGSSVAVPYWDWTKPIHNIP. Disulfide bonds link Cys-2266-Cys-2333 and Cys-2420-Cys-2426. Glu-2424 contacts a divalent metal cation. A functional unit g (internal arc) region spans residues 2518-2921; that stretch reads HGVRKEINTL…EKHHEDHHED (404 aa). His-2558 is a binding site for Cu cation. A disulfide bridge connects residues Cys-2564 and Cys-2574. The N-linked (GlcNAc...) asparagine glycan is linked to Asn-2571. Positions 2575–2577 form a cross-link, 2'-(S-cysteinyl)-histidine (Cys-His); it reads CTH. Positions 2577, 2586, 2686, 2690, and 2717 each coordinate Cu cation. 2 disulfides stabilise this stretch: Cys-2676-Cys-2743 and Cys-2830-Cys-2836. Residues 2696 to 2737 form a WD 6 repeat; sequence LTPYGMSTLEYTTYDPLFWLHHANTDRIWAIWQALQEYRGLP. A functional unit h (internal slab) region spans residues 2922–3414; it reads ILVRKNIHSL…LRIHVHVDDE (493 aa). His-2962 provides a ligand contact to Cu cation. An intrachain disulfide couples Cys-2968 to Cys-2978. Positions 2979 to 2981 form a cross-link, 2'-(S-cysteinyl)-histidine (Cys-His); it reads CVH. His-2981, His-2990, His-3091, His-3095, and His-3122 together coordinate Cu cation. Cys-3081 and Cys-3148 form a disulfide bridge. The stretch at 3101–3142 is one WD 7 repeat; the sequence is AEKYSMSTLEYSAFDPYFMIHHASLDKIWIIWQELQKRRVKP. Asn-3278 carries an N-linked (GlcNAc...) asparagine glycan. Cys-3367 and Cys-3400 are joined by a disulfide.

It belongs to the tyrosinase family. Hemocyanin subfamily. As to quaternary structure, homo-didecamer, with two decamers assembled face-to-face at their open ends. This didecamer form a stable 25 nM cylinder wall. In terms of processing, probably N-glycosylated. Asn-1280 and Asn-2484 are buried deeply in the protein which make them inaccessible for sugar attachment. Asn-3278 N-glycan is likely to represent a diantennate carbohydrate tree. The didecamer is almost evenly tagged by a total of 120 sugar trees. Hemolymph.

The protein resides in the secreted. It is found in the extracellular space. Its function is as follows. Hemocyanins are copper-containing oxygen carriers occurring freely dissolved in the hemolymph of many mollusks and arthropods. The polypeptide is Hemocyanin 1 (Megathura crenulata (Giant keyhole limpet)).